Consider the following 55-residue polypeptide: ATP synthase small subunit 6-A, mitochondrial (55 aa).

A mitochondrion-targeting transit peptide spans 1 to 11 (MRLFDPWPVFF). The chain crosses the membrane as a helical span at residues 21-39 (FLTGFAVTGVLITKLTAGL).

Belongs to the ATPase 6 subunit family.

It is found in the mitochondrion inner membrane. In terms of biological role, mitochondrial membrane ATP synthase (F(1)F(0) ATP synthase or Complex V) produces ATP from ADP in the presence of a proton gradient across the membrane which is generated by electron transport complexes of the respiratory chain. F-type ATPases consist of two structural domains, F(1) - containing the extramembraneous catalytic core and F(0) - containing the membrane proton channel, linked together by a central stalk and a peripheral stalk. During catalysis, ATP synthesis in the catalytic domain of F(1) is coupled via a rotary mechanism of the central stalk subunits to proton translocation. Part of the complex F(0) domain. Confers tolerance to several abiotic stresses (e.g. salt, mannitol, drought, oxidative and cold stresses), probably by providing additional energy needed for cell homeostasis. The chain is ATP synthase small subunit 6-A, mitochondrial from Arabidopsis thaliana (Mouse-ear cress).